Reading from the N-terminus, the 313-residue chain is Protein FixB (313 aa).

255–283 (LYLAVGISGQIQHMVGANASQTIFAINKD) contacts FAD.

This sequence belongs to the ETF alpha-subunit/FixB family. In terms of assembly, heterodimer of FixA and FixB.

It participates in amine and polyamine metabolism; carnitine metabolism. Its function is as follows. Required for anaerobic carnitine reduction. May bring reductant to CaiA. The polypeptide is Protein FixB (Escherichia coli (strain 55989 / EAEC)).